The sequence spans 265 residues: Phosphonates import ATP-binding protein PhnC 1 (265 aa).

The ABC transporter domain maps to 3-247; that stretch reads LRLSAIDLRH…HLDTLYANEQ (245 aa). 36 to 43 contacts ATP; the sequence is GPSGAGKT.

Belongs to the ABC transporter superfamily. Phosphonates importer (TC 3.A.1.9.1) family. In terms of assembly, the complex is composed of two ATP-binding proteins (PhnC), two transmembrane proteins (PhnE) and a solute-binding protein (PhnD).

It is found in the cell inner membrane. It catalyses the reaction phosphonate(out) + ATP + H2O = phosphonate(in) + ADP + phosphate + H(+). In terms of biological role, part of the ABC transporter complex PhnCDE involved in phosphonates import. Responsible for energy coupling to the transport system. The chain is Phosphonates import ATP-binding protein PhnC 1 from Pseudomonas syringae pv. tomato (strain ATCC BAA-871 / DC3000).